Here is a 365-residue protein sequence, read N- to C-terminus: Methionine import ATP-binding protein MetN (365 aa).

In terms of domain architecture, ABC transporter spans 17 to 256 (IVFEHVTKEF…PQSETTQRFL (240 aa)). Residue 53-60 (GHSGAGKS) participates in ATP binding. Residues 346–365 (SNSAAPTTSATVPTPTEEAH) form a disordered region.

Belongs to the ABC transporter superfamily. Methionine importer (TC 3.A.1.24) family. As to quaternary structure, the complex is composed of two ATP-binding proteins (MetN), two transmembrane proteins (MetI) and a solute-binding protein (MetQ).

It is found in the cell membrane. The catalysed reaction is L-methionine(out) + ATP + H2O = L-methionine(in) + ADP + phosphate + H(+). The enzyme catalyses D-methionine(out) + ATP + H2O = D-methionine(in) + ADP + phosphate + H(+). Its function is as follows. Part of the ABC transporter complex MetNIQ involved in methionine import. Responsible for energy coupling to the transport system. This Cutibacterium acnes (strain DSM 16379 / KPA171202) (Propionibacterium acnes) protein is Methionine import ATP-binding protein MetN.